A 146-amino-acid polypeptide reads, in one-letter code: uncharacterized protein (146 aa).

Positions 1 to 120 constitute an N-acetyltransferase domain; that stretch reads MTDKFDANDE…TILKWEKNMD (120 aa).

It belongs to the acetyltransferase family.

This is an uncharacterized protein from Streptococcus pyogenes serotype M6 (strain ATCC BAA-946 / MGAS10394).